The sequence spans 169 residues: Ribosome maturation factor RimM (169 aa).

One can recognise a PRC barrel domain in the interval 95–168 (EGNYYIFQIV…KMKVELLEGL (74 aa)).

This sequence belongs to the RimM family. As to quaternary structure, binds ribosomal protein uS19.

Its subcellular location is the cytoplasm. An accessory protein needed during the final step in the assembly of 30S ribosomal subunit, possibly for assembly of the head region. Essential for efficient processing of 16S rRNA. May be needed both before and after RbfA during the maturation of 16S rRNA. It has affinity for free ribosomal 30S subunits but not for 70S ribosomes. This Desulforamulus reducens (strain ATCC BAA-1160 / DSM 100696 / MI-1) (Desulfotomaculum reducens) protein is Ribosome maturation factor RimM.